The chain runs to 446 residues: 5-hydroxytryptamine receptor (446 aa).

Residues 1-65 lie on the Extracellular side of the membrane; it reads MEGAEGQEEL…AALVRAAAKA (65 aa). N-linked (GlcNAc...) asparagine glycosylation is found at asparagine 23, asparagine 27, asparagine 36, and asparagine 42. A helical transmembrane segment spans residues 66–88; that stretch reads VVLGLLILATVVGNVFVIAAILL. Residues 89–98 are Cytoplasmic-facing; sequence ERHLRSAANN. The chain crosses the membrane as a helical span at residues 99 to 120; sequence LILSLAVADLLVACLVMPLGAV. Residues 121–135 are Extracellular-facing; sequence YEVVQRWTLGPELCD. Cysteine 134 and cysteine 214 form a disulfide bridge. A helical membrane pass occupies residues 136 to 157; the sequence is MWTSGDVLCCTASILHLVAIAL. Over 158-176 the chain is Cytoplasmic; that stretch reads DRYWAVTNIDYIHASTAKR. The helical transmembrane segment at 177-199 threads the bilayer; that stretch reads VGMMIACVWTVSFFVCIAQLLGW. At 200–227 the chain is on the extracellular side; sequence KDPDWNQRVSEDLRCVVSQDVGYQIFAT. Residues 228 to 249 form a helical membrane-spanning segment; it reads ASSFYVPVLIILILYWRIYQTA. Topologically, residues 250–367 are cytoplasmic; sequence RKRIRRRRGA…SKRERKAAKT (118 aa). Residues 304 to 324 show a composition bias toward polar residues; sequence TTTGFTNVSSNNTSPEKQSCA. Residues 304 to 329 are disordered; the sequence is TTTGFTNVSSNNTSPEKQSCANGLEA. A helical membrane pass occupies residues 368–391; it reads LAIITGAFVACWLPFFVLAILVPT. The Extracellular segment spans residues 392-399; that stretch reads CDCEVSPV. A helical membrane pass occupies residues 400 to 422; sequence LTSLSLWLGYFNSTLNPVIYTVF. The Cytoplasmic segment spans residues 423–446; it reads SPEFRHAFQRLLCGRRVRRRRAPQ.

This sequence belongs to the G-protein coupled receptor 1 family.

It localises to the cell membrane. This is a receptor for 5-hydroxytryptamine (serotonin), a biogenic hormone that function as a neurotransmitter, a hormone, and a mitogen. The protein is 5-hydroxytryptamine receptor of Bombyx mori (Silk moth).